The sequence spans 152 residues: Ribosome maturation factor RimP (152 aa).

Belongs to the RimP family.

It is found in the cytoplasm. In terms of biological role, required for maturation of 30S ribosomal subunits. The sequence is that of Ribosome maturation factor RimP from Burkholderia orbicola (strain MC0-3).